The following is a 366-amino-acid chain: Short-chain collagen C4 (366 aa).

Positions 1-14 (DTGPQGPQGVAGPP) are enriched in low complexity. 2 triple-helical region regions span residues 1–23 (DTGP…KGDK) and 40–210 (GPPG…NGAV). The segment at 1–207 (DTGPQGPQGV…QGPQGAPGSN (207 aa)) is disordered. The segment covering 28–45 (YPPPPTCPTCPAGPPGAP) has biased composition (pro residues). Composition is skewed to low complexity over residues 75 to 90 (PGND…PGYD) and 99 to 110 (TGAPGPQGPKGD). Over residues 138–149 (DGQDGAKGDKGD) the composition is skewed to basic and acidic residues. Low complexity-rich tracts occupy residues 150–168 (QGPA…QGPA) and 189–201 (QGPK…QGPQ).

Its subcellular location is the secreted. It localises to the extracellular space. The protein localises to the extracellular matrix. This chain is Short-chain collagen C4, found in Ephydatia muelleri (Mueller's freshwater sponge).